A 601-amino-acid polypeptide reads, in one-letter code: Invasin CotH3 (601 aa).

The signal sequence occupies residues 1-17 (MKLSIISAAFLVAITHA). N-linked (GlcNAc...) asparagine glycans are attached at residues Asn28, Asn85, Asn170, Asn324, Asn449, Asn527, Asn541, Asn554, Asn561, and Asn571. The span at 539-579 (SANGTTAAAPAPAAGNSTGKGGNQSISSSASSNKTSAQSTS) shows a compositional bias: low complexity. The interval 539-581 (SANGTTAAAPAPAAGNSTGKGGNQSISSSASSNKTSAQSTSGA) is disordered. Residue Ser579 is the site of GPI-anchor amidated serine attachment. A propeptide spans 580–601 (GASRSKTAPIVLAISALALLVF) (removed in mature form).

Interacts with HSPA5/BiP on the cell surface of host nasal epithelial cells.

It is found in the cell membrane. Functionally, promotes invasion of host epithelial cells by adhering to receptors on the host cell surface to facilitate endocytosis of the pathogen into host cells. Binds HSPA5/BiP protein on the cell surface of host nasal epithelial cells. This chain is Invasin CotH3, found in Rhizopus delemar (strain RA 99-880 / ATCC MYA-4621 / FGSC 9543 / NRRL 43880) (Mucormycosis agent).